Consider the following 46-residue polypeptide: uncharacterized protein (46 aa).

This is an uncharacterized protein from Dictyostelium discoideum (Social amoeba).